The sequence spans 260 residues: Snake venom serine protease 2B (260 aa).

An N-terminal signal peptide occupies residues 1-18 (MVLIRVLANLLILQLSYA). Residues 19 to 24 (QKSSEL) constitute a propeptide that is removed on maturation. The Peptidase S1 domain occupies 25-251 (VVGGDECNIN…HLDWIQSIIA (227 aa)). 6 disulfides stabilise this stretch: C31-C165, C52-C68, C102-C258, C144-C212, C176-C191, and C202-C227. H67 serves as the catalytic Charge relay system. N-linked (GlcNAc...) asparagine glycans are attached at residues N101 and N105. The active-site Charge relay system is the D112. N123 and N156 each carry an N-linked (GlcNAc...) asparagine glycan. The active-site Charge relay system is the S206.

The protein belongs to the peptidase S1 family. Snake venom subfamily. In terms of assembly, monomer. In terms of tissue distribution, expressed by the venom gland.

It is found in the secreted. In terms of biological role, snake venom serine protease that may act in the hemostasis system of the prey. This chain is Snake venom serine protease 2B (TLG2B), found in Craspedocephalus gramineus (Bamboo pit viper).